The primary structure comprises 504 residues: L-carnitine/gamma-butyrobetaine antiporter (504 aa).

A run of 12 helical transmembrane segments spans residues 10-30 (IEPK…WLTV), 51-71 (WGWA…WLVF), 92-112 (IFMM…SIEI), 143-163 (GPLP…FFFV), 195-215 (FYLV…TPLV), 231-251 (LDAI…ACGL), 263-283 (SYLS…SFIM), 316-336 (WTVF…IFLA), 347-367 (LCFG…TVLG), 398-418 (WAAL…CFIA), 446-466 (LLVR…LLAL), and 475-495 (AIIA…LSFI).

It belongs to the BCCT transporter (TC 2.A.15) family. CaiT subfamily. As to quaternary structure, homotrimer.

Its subcellular location is the cell inner membrane. It catalyses the reaction 4-(trimethylamino)butanoate(in) + (R)-carnitine(out) = 4-(trimethylamino)butanoate(out) + (R)-carnitine(in). The protein operates within amine and polyamine metabolism; carnitine metabolism. Its function is as follows. Catalyzes the exchange of L-carnitine for gamma-butyrobetaine. This Escherichia coli O8 (strain IAI1) protein is L-carnitine/gamma-butyrobetaine antiporter.